The chain runs to 1324 residues: Probable phosphoribosylformylglycinamidine synthase (1324 aa).

Residues 314–325 (GATTGTGGRIRD), 394–396 (SGF), and A681 each bind ATP. Residues D682, E721, N725, and D894 each coordinate Mg(2+). S896 is an ATP binding site. A Glutamine amidotransferase type-1 domain is found at 1053–1295 (RVAIIREEGS…LTWQWAESSE (243 aa)). C1146 functions as the Nucleophile in the catalytic mechanism. Catalysis depends on residues H1280 and D1282.

This sequence in the N-terminal section; belongs to the FGAMS family.

The protein resides in the cytoplasm. The enzyme catalyses N(2)-formyl-N(1)-(5-phospho-beta-D-ribosyl)glycinamide + L-glutamine + ATP + H2O = 2-formamido-N(1)-(5-O-phospho-beta-D-ribosyl)acetamidine + L-glutamate + ADP + phosphate + H(+). It participates in purine metabolism; IMP biosynthesis via de novo pathway; 5-amino-1-(5-phospho-D-ribosyl)imidazole from N(2)-formyl-N(1)-(5-phospho-D-ribosyl)glycinamide: step 1/2. Functionally, phosphoribosylformylglycinamidine synthase involved in the purines biosynthetic pathway. Catalyzes the ATP-dependent conversion of formylglycinamide ribonucleotide (FGAR) and glutamine to yield formylglycinamidine ribonucleotide (FGAM) and glutamate. This Caenorhabditis elegans protein is Probable phosphoribosylformylglycinamidine synthase.